The chain runs to 109 residues: uncharacterized protein (109 aa).

This is an uncharacterized protein from Homo sapiens (Human).